Reading from the N-terminus, the 1765-residue chain is Sodium channel protein type 11 subunit alpha (1765 aa).

Topologically, residues Met1 to Ser126 are cytoplasmic. Residues Phe115–Arg406 form an I repeat. The helical transmembrane segment at Val127 to Asn148 threads the bilayer. N-linked (GlcNAc...) asparagine glycosylation occurs at Asn149. The Extracellular segment spans residues Asn149–Asn159. The chain crosses the membrane as a helical span at residues Ile160–Ala179. The Cytoplasmic segment spans residues Arg180–Arg191. A helical membrane pass occupies residues Asp192 to Leu211. At Gly212–Ser219 the chain is on the extracellular side. N-linked (GlcNAc...) asparagine glycosylation occurs at Asn217. The chain crosses the membrane as a helical; Voltage-sensor span at residues Thr220–Leu239. At Lys240 to Asp255 the chain is on the cytoplasmic side. The helical transmembrane segment at Val256–Leu269 threads the bilayer. Residues Val270–Ser342 lie on the Extracellular side of the membrane. Cysteines 283 and 320 form a disulfide. N-linked (GlcNAc...) asparagine glycans are attached at residues Asn303, Asn327, and Asn336. Residues Phe343–Leu367 constitute an intramembrane region (pore-forming). The Extracellular segment spans residues Arg368–Phe374. The helical transmembrane segment at Val375–Ala400 threads the bilayer. Residues Tyr401–Thr570 lie on the Cytoplasmic side of the membrane. The disordered stretch occupies residues Arg470–Pro490. The stretch at Cys557 to Gln821 is one II repeat. The chain crosses the membrane as a helical span at residues Ile571 to Met594. Over Glu595 to Asp605 the chain is Extracellular. Residues Ile606–Leu629 form a helical membrane-spanning segment. Topologically, residues Asp630–His637 are cytoplasmic. A helical membrane pass occupies residues Gly638–Leu659. Residues Ser660–Ser664 lie on the Extracellular side of the membrane. A glycan (N-linked (GlcNAc...) asparagine) is linked at Asn662. Residues Phe665–Leu684 traverse the membrane as a helical; Voltage-sensor segment. Over Asn685–Gly699 the chain is Cytoplasmic. Residues Asn700–Ala722 form a helical membrane-spanning segment. Residues Lys723–Asp742 are Extracellular-facing. A glycan (N-linked (GlcNAc...) asparagine) is linked at Asn725. An intramembrane region (pore-forming) is located at residues Phe743 to Trp763. Topologically, residues Glu764–Pro773 are extracellular. A disulfide bridge links Cys765 with Cys775. A helical membrane pass occupies residues Leu774–Leu799. Residues Asn800–Gln1030 are Cytoplasmic-facing. A disordered region spans residues Asn850–Ala869. The III repeat unit spans residues Asn1023–Leu1320. A helical transmembrane segment spans residues Ile1031–Ile1053. The Extracellular segment spans residues Phe1054–Lys1067. A helical membrane pass occupies residues Leu1068 to Phe1093. The Cytoplasmic portion of the chain corresponds to Arg1094–Ser1099. The chain crosses the membrane as a helical span at residues Ala1100 to Thr1117. A topological domain (extracellular) is located at residue Asn1118. A helical; Voltage-sensor transmembrane segment spans residues Leu1119–Phe1140. Over Glu1141–Asn1159 the chain is Cytoplasmic. Residues Val1160–Gly1181 form a helical membrane-spanning segment. The Extracellular portion of the chain corresponds to Lys1182–Val1224. Residues Asn1188, Asn1197, Asn1203, and Asn1211 are each glycosylated (N-linked (GlcNAc...) asparagine). Residues Gly1225–Ala1246 constitute an intramembrane region (pore-forming). Residues Ala1247 to Asn1262 are Extracellular-facing. The chain crosses the membrane as a helical span at residues Leu1263–Ile1289. Residues Asp1290–Asp1342 lie on the Cytoplasmic side of the membrane. One copy of the IV repeat lies at Ile1329–Gln1619. The chain crosses the membrane as a helical span at residues Leu1343–Ala1366. At Glu1367–Lys1377 the chain is on the extracellular side. A helical transmembrane segment spans residues Ile1378–Leu1401. Topologically, residues Arg1402 to Thr1407 are cytoplasmic. The chain crosses the membrane as a helical span at residues Asn1408–Glu1431. Residues Asn1432–Leu1440 lie on the Extracellular side of the membrane. A helical; Voltage-sensor membrane pass occupies residues Phe1441–Arg1463. Topologically, residues Thr1464 to Asn1478 are cytoplasmic. A helical transmembrane segment spans residues Ile1479 to Val1501. Over Lys1502–Thr1515 the chain is Extracellular. An intramembrane region (pore-forming) is located at residues Phe1516 to Pro1538. The Extracellular segment spans residues Met1539 to Ile1559. A helical membrane pass occupies residues Ala1560 to Leu1584. Topologically, residues Glu1585–Asp1765 are cytoplasmic.

This sequence belongs to the sodium channel (TC 1.A.1.10) family. Nav1.9/SCN11A subfamily. The voltage-resistant sodium channel consists of an ion conducting pore forming alpha-subunit regulated by one or more auxiliary subunits SCN1B, SCN2B and SCN3B. Expressed in the dorsal root ganglia (C-fiber neurons), spinal cord, trigeminal ganglia, testis, ovary, uterus and small intestine.

The protein resides in the cell membrane. It catalyses the reaction Na(+)(in) = Na(+)(out). Its function is as follows. Sodium channel mediating the voltage-dependent sodium ion permeability of excitable membranes. Assuming opened or closed conformations in response to the voltage difference across the membrane, the protein forms a sodium-selective channel through which sodium ions may pass in accordance with their electrochemical gradient. Involved in membrane depolarization during action potential in nociceptors which function as key relay stations for the electrical transmission of pain signals from the periphery to the central nervous system. Also involved in rapid BDNF-evoked neuronal depolarization. The chain is Sodium channel protein type 11 subunit alpha from Mus musculus (Mouse).